Here is a 340-residue protein sequence, read N- to C-terminus: Protein RecA (340 aa).

67 to 74 (GNESSGKT) is a binding site for ATP.

It belongs to the RecA family.

Its subcellular location is the cytoplasm. In terms of biological role, can catalyze the hydrolysis of ATP in the presence of single-stranded DNA, the ATP-dependent uptake of single-stranded DNA by duplex DNA, and the ATP-dependent hybridization of homologous single-stranded DNAs. It interacts with LexA causing its activation and leading to its autocatalytic cleavage. This chain is Protein RecA, found in Mycoplasma genitalium (strain ATCC 33530 / DSM 19775 / NCTC 10195 / G37) (Mycoplasmoides genitalium).